We begin with the raw amino-acid sequence, 165 residues long: MKTPRLPIAIQQAVMRRLRENLAQANLKLDRHYPEPKLVYTQRGTSAGTAWLESYEIRLNPVLLLENIDTFIAEVVPHELAHLLVWKHFGRKAPHGKEWKWMMESVLGVPARRTHQFALQSVRRNTFPYHCQCQQNQLTVRRHNRVVRGEAVYRCVHCGEPLVAG.

The SprT-like domain occupies 22 to 163; it reads LAQANLKLDR…RCVHCGEPLV (142 aa). H78 is a Zn(2+) binding site. E79 is a catalytic residue. Position 82 (H82) interacts with Zn(2+).

It belongs to the SprT family. It depends on Zn(2+) as a cofactor.

The protein localises to the cytoplasm. The protein is Protein SprT of Salmonella paratyphi C (strain RKS4594).